Consider the following 209-residue polypeptide: CASP-like protein 2A1 (209 aa).

Residues 1-38 (MSKMAEEKVLAAPATVDGGMQSSGDLQASSAAAARVRP) lie on the Cytoplasmic side of the membrane. A helical membrane pass occupies residues 39–59 (VETLLRAAPLGLCVAAMAIML). The Extracellular segment spans residues 60–80 (RNSVTNEYGTVSYSDLGGFKY). A helical membrane pass occupies residues 81–101 (LVYANGLCAAYSLASAFYIAV). Residues 102–109 (PRPATLSR) lie on the Cytoplasmic side of the membrane. The helical transmembrane segment at 110 to 130 (SWVVFLLDQVFTYLILAAGAA) threads the bilayer. The Extracellular segment spans residues 131–163 (SAELLYLAYNGDKEVTWSEACGVFGGFCRQART). A helical transmembrane segment spans residues 164-184 (SVAITFASVACYILLSLISSY). Over 185–209 (RLFSAYDPPQPSLGNKGVEIAAFPR) the chain is Cytoplasmic.

It belongs to the Casparian strip membrane proteins (CASP) family. As to quaternary structure, homodimer and heterodimers.

It is found in the cell membrane. This is CASP-like protein 2A1 from Oryza sativa subsp. indica (Rice).